The primary structure comprises 575 residues: Lysine--tRNA ligase (575 aa).

Residues Glu412 and Glu419 each contribute to the Mg(2+) site.

This sequence belongs to the class-II aminoacyl-tRNA synthetase family. Homodimer. The cofactor is Mg(2+).

The protein resides in the cytoplasm. It carries out the reaction tRNA(Lys) + L-lysine + ATP = L-lysyl-tRNA(Lys) + AMP + diphosphate. The chain is Lysine--tRNA ligase from Bacteroides fragilis (strain ATCC 25285 / DSM 2151 / CCUG 4856 / JCM 11019 / LMG 10263 / NCTC 9343 / Onslow / VPI 2553 / EN-2).